The chain runs to 21 residues: Peptide PGLa-R6 (21 aa).

Leucine 21 is subject to Leucine amide.

In terms of tissue distribution, expressed by the skin glands.

Its subcellular location is the secreted. Its function is as follows. Antimicrobial peptide. The sequence is that of Peptide PGLa-R6 from Xenopus ruwenzoriensis (Uganda clawed frog).